The sequence spans 428 residues: Enolase (428 aa).

Glutamine 163 contacts (2R)-2-phosphoglycerate. Catalysis depends on glutamate 205, which acts as the Proton donor. Residues aspartate 242, glutamate 285, and aspartate 312 each coordinate Mg(2+). Positions 337, 366, 367, and 388 each coordinate (2R)-2-phosphoglycerate. The active-site Proton acceptor is the lysine 337.

Belongs to the enolase family. Mg(2+) is required as a cofactor.

The protein resides in the cytoplasm. Its subcellular location is the secreted. The protein localises to the cell surface. It carries out the reaction (2R)-2-phosphoglycerate = phosphoenolpyruvate + H2O. Its pathway is carbohydrate degradation; glycolysis; pyruvate from D-glyceraldehyde 3-phosphate: step 4/5. Functionally, catalyzes the reversible conversion of 2-phosphoglycerate (2-PG) into phosphoenolpyruvate (PEP). It is essential for the degradation of carbohydrates via glycolysis. The protein is Enolase of Neisseria meningitidis serogroup C (strain 053442).